The chain runs to 157 residues: S-ribosylhomocysteine lyase (157 aa).

Fe cation is bound by residues His-54, His-58, and Cys-124.

It belongs to the LuxS family. Homodimer. Requires Fe cation as cofactor.

The enzyme catalyses S-(5-deoxy-D-ribos-5-yl)-L-homocysteine = (S)-4,5-dihydroxypentane-2,3-dione + L-homocysteine. In terms of biological role, involved in the synthesis of autoinducer 2 (AI-2) which is secreted by bacteria and is used to communicate both the cell density and the metabolic potential of the environment. The regulation of gene expression in response to changes in cell density is called quorum sensing. Catalyzes the transformation of S-ribosylhomocysteine (RHC) to homocysteine (HC) and 4,5-dihydroxy-2,3-pentadione (DPD). The polypeptide is S-ribosylhomocysteine lyase (Lacticaseibacillus paracasei (strain ATCC 334 / BCRC 17002 / CCUG 31169 / CIP 107868 / KCTC 3260 / NRRL B-441) (Lactobacillus paracasei)).